A 647-amino-acid chain; its full sequence is LIM domain kinase 1 (647 aa).

LIM zinc-binding domains follow at residues Cys25 to Asp75 and Cys84 to Cys137. Residues Leu165–Pro258 form the PDZ domain. Position 210 is a phosphoserine (Ser210). The residue at position 229 (Thr229) is a Phosphothreonine. The segment at Asp260 to Gly319 is disordered. Phosphoserine occurs at positions 298, 302, 307, and 310. The segment covering Ser302 to Ser313 has biased composition (low complexity). Residue Ser323 is modified to Phosphoserine; by MAPKAPK2. Ser337 is subject to Phosphoserine. One can recognise a Protein kinase domain in the interval Leu339–Leu604. ATP-binding positions include Leu345–Ala353 and Lys368. Residue Asp460 is part of the active site. Thr508 bears the Phosphothreonine; by ROCK1 and PAK1 mark.

Belongs to the protein kinase superfamily. TKL Ser/Thr protein kinase family. In terms of assembly, interacts (via LIM domain) with the cytoplasmic domain of NRG1. Interacts with NISCH. Interacts with RLIM and RNF6. Self-associates to form homodimers. Interacts with HSP90AA1; this interaction promotes LIMK1 dimerization and subsequent transphosphorylation. Interacts with CDKN1C. Interacts with SSH1. Interacts with ROCK1. Interacts (via LIM zinc-binding domains) with FAM89B/LRAP25 (via LRR repeat). Forms a tripartite complex with CDC42BPA, CDC42BPB and FAM89B/LRAP25. In terms of processing, autophosphorylated. Phosphorylated on Thr-508 by ROCK1 and PAK1, resulting in activation. Phosphorylated by PAK4 which increases the ability of LIMK1 to phosphorylate cofilin. Phosphorylated at Ser-323 by MAPKAPK2 during activation of VEGFA-induced signaling, which results in activation of LIMK1 and promotion of actin reorganization, cell migration, and tubule formation of endothelial cells. Dephosphorylated and inactivated by SSH1. Phosphorylated by CDC42BP. Post-translationally, ubiquitinated. 'Lys-48'-linked polyubiquitination by RNF6 leads to proteasomal degradation through the 26S proteasome, modulating LIMK1 levels in the growth cone and its effect on axonal outgrowth. Also polyubiquitinated by RLIM. Highest expression in both adult and fetal nervous system. Detected ubiquitously throughout the different regions of adult brain, with highest levels in the cerebral cortex. Expressed to a lesser extent in heart and skeletal muscle.

It localises to the cytoplasm. Its subcellular location is the nucleus. The protein resides in the cytoskeleton. It is found in the cell projection. The protein localises to the lamellipodium. The catalysed reaction is L-seryl-[protein] + ATP = O-phospho-L-seryl-[protein] + ADP + H(+). It catalyses the reaction L-threonyl-[protein] + ATP = O-phospho-L-threonyl-[protein] + ADP + H(+). Functionally, serine/threonine-protein kinase that plays an essential role in the regulation of actin filament dynamics. Acts downstream of several Rho family GTPase signal transduction pathways. Activated by upstream kinases including ROCK1, PAK1 and PAK4, which phosphorylate LIMK1 on a threonine residue located in its activation loop. LIMK1 subsequently phosphorylates and inactivates the actin binding/depolymerizing factors cofilin-1/CFL1, cofilin-2/CFL2 and destrin/DSTN, thereby preventing the cleavage of filamentous actin (F-actin), and stabilizing the actin cytoskeleton. In this way LIMK1 regulates several actin-dependent biological processes including cell motility, cell cycle progression, and differentiation. Phosphorylates TPPP on serine residues, thereby promoting microtubule disassembly. Stimulates axonal outgrowth and may be involved in brain development. In terms of biological role, has a dominant negative effect on actin cytoskeletal changes. Required for atypical chemokine receptor ACKR2-induced phosphorylation of cofilin (CFL1). The protein is LIM domain kinase 1 (LIMK1) of Homo sapiens (Human).